We begin with the raw amino-acid sequence, 706 residues long: Glycine--tRNA ligase beta subunit (706 aa).

It belongs to the class-II aminoacyl-tRNA synthetase family. Tetramer of two alpha and two beta subunits.

The protein resides in the cytoplasm. It catalyses the reaction tRNA(Gly) + glycine + ATP = glycyl-tRNA(Gly) + AMP + diphosphate. The chain is Glycine--tRNA ligase beta subunit from Acidobacterium capsulatum (strain ATCC 51196 / DSM 11244 / BCRC 80197 / JCM 7670 / NBRC 15755 / NCIMB 13165 / 161).